A 148-amino-acid polypeptide reads, in one-letter code: Glyoxalase domain-containing protein 5 (148 aa).

The VOC domain maps to 25 to 145; sequence RLDHIVMTVK…DRNLLEVSSY (121 aa).

The protein belongs to the glyoxalase I family.

The protein is Glyoxalase domain-containing protein 5 (Glod5) of Mus musculus (Mouse).